Consider the following 383-residue polypeptide: tRNA (guanine-N(7)-)-methyltransferase non-catalytic subunit wuho (383 aa).

5 WD repeats span residues 61–101 (NLEV…ALLL), 105–144 (ALAR…APPK), 148–187 (GHLS…DIHS), 191–231 (GHKE…EVLQ), and 289–329 (AGSW…QAES).

The protein belongs to the WD repeat TRM82 family. As to quaternary structure, forms a heterodimer with the catalytic subunit Mettl1. Interacts with mei-P26 and weakly interacts with bgcn; required for the function or formation of the mei-P26-bgcn-bam-sxl complex. Interacts with nanos; may be involved in mei-P26-dependent derepression of the BMP signaling pathway. Interacts with Myc; the interaction may be mediated by mei-P26 and may be involved in the regulation of ribosome biogenesis. In terms of tissue distribution, in testis, it is present at high level in hub cells, a niche for germline stem cells of testis. Ubiquitously expressed in all testicular cells throughout spermatogenesis. Ubiquitously expressed in all germline and somatic cells of the ovary.

It localises to the nucleus. Its subcellular location is the cytoplasm. It participates in tRNA modification; N(7)-methylguanine-tRNA biosynthesis. Functionally, required for the Mettl1-dependent formation of N(7)-methylguanine at position 46 (m7G46) in tRNA. In the Mettl1-wuho methyltransferase complex, it is required to stabilize and induce conformational changes of the catalytic subunit. Required for binding of nanos mRNA and repression of translation by the mei-P26-bgcn-bam-sxl complex. May cooperate with mei-P26 and nanos to derepress the BMP signaling pathway. May cooperate with mei-P26 to suppress expression of a subset of microRNAs. May cooperate with mei-P26 to regulate bam expression levels in germline cells during gametogenesis. Required to promote mitosis to meiosis transition during gametogenesis. May regulate germline cell division in part by regulating ribosome biogenesis. The sequence is that of tRNA (guanine-N(7)-)-methyltransferase non-catalytic subunit wuho from Drosophila mojavensis (Fruit fly).